The chain runs to 364 residues: Cyclin-D3-2 (364 aa).

The segment at 331–364 (PPGRPIKRGAAAATTADPLPADEESRDAWPPYAA) is disordered. The span at 340–349 (AAAATTADPL) shows a compositional bias: low complexity.

It belongs to the cyclin family. Cyclin D subfamily.

The chain is Cyclin-D3-2 (CYCD3-2) from Oryza sativa subsp. japonica (Rice).